The following is a 320-amino-acid chain: MTYQNGVEVLLEEFLDYLTKEETICSLEIEKLKVSIDELEKETDEPRVLQGINYFRTAKEVYQLSRKAYETKEEVVSEALILWIYENLWKGFNVPKGYRKSDMVIFGAKFSPPPPYVVPNLIRTIVNWLRNEKTIDVVKKSIIFHTLFEVIHPFPDGNGRVGRILLNAILVENGLLNVAFRNREKYISALREAEEGAIVVVEKLSRGRKIDYSSITETVEYYGNLNVFDELIRTEMMHSLKVYSNIKQVFLTPEEAAKLLGLKNKDYVRVLIHRGKLKAVKEEGKWKIPLSEVVKNFEHKLKGEEFKLANNLFKGKLSPS.

The 131-residue stretch at Val-76–Arg-206 folds into the Fido domain. ATP-binding positions include Lys-100–Ser-101, Gly-157–Gly-159, and Arg-163.

Belongs to the fic family.

It carries out the reaction L-tyrosyl-[protein] + ATP = O-(5'-adenylyl)-L-tyrosyl-[protein] + diphosphate. The enzyme catalyses L-threonyl-[protein] + ATP = 3-O-(5'-adenylyl)-L-threonyl-[protein] + diphosphate. In terms of biological role, probable adenylyltransferase that mediates the addition of adenosine 5'-monophosphate (AMP) to specific residues of target proteins. This Aquifex aeolicus (strain VF5) protein is Probable protein adenylyltransferase aq_aa38.